Consider the following 590-residue polypeptide: Myo-inositol transporter 3 (590 aa).

Residues 1 to 26 (MRTTHIEDRDNNSLENKHTDHIEGVE) show a composition bias toward basic and acidic residues. The segment at 1 to 40 (MRTTHIEDRDNNSLENKHTDHIEGVENGKGTQEPPSPSGF) is disordered. The Cytoplasmic segment spans residues 1–57 (MRTTHIEDRDNNSLENKHTDHIEGVENGKGTQEPPSPSGFGGHLIDENLVHVEGEDK). The helical transmembrane segment at 58–78 (VTWYLCFLISASAIAGFLFGY) threads the bilayer. The Extracellular portion of the chain corresponds to 79 to 105 (DTGVVGVALPLVGTDLGGNELNSSQQE). The N-linked (GlcNAc...) asparagine glycan is linked to N100. Residues 106–126 (IITAGTTIGAIFGSAILGGWG) traverse the membrane as a helical segment. Over 127 to 132 (DHLGRK) the chain is Cytoplasmic. Residues 133 to 153 (MAILISDVFFTVGAVIIASSY) form a helical membrane-spanning segment. The Extracellular portion of the chain corresponds to 154–157 (SVPQ). A helical transmembrane segment spans residues 158–178 (IIVGRIVLGVGVGGAAVIAPL). The Cytoplasmic portion of the chain corresponds to 179–192 (FITETAPTAVRGRC). Residues 193–213 (IGVNAFFIPFGQLVADSIGAG) traverse the membrane as a helical segment. Residues 214–222 (VQNMHGGWR) are Extracellular-facing. Residues 223–243 (LLFALGAVPSLIQLLLFHYLP) form a helical membrane-spanning segment. The Cytoplasmic segment spans residues 244–325 (ESPRILIVKG…AVSVLQAAGQ (82 aa)). The chain crosses the membrane as a helical span at residues 326-346 (LCGFNTLLYYAGTLFGLLGLS). Residues 347–349 (NPA) lie on the Extracellular side of the membrane. Residues 350–370 (LGGLIPAGTNAVFVLIGMSTV) traverse the membrane as a helical segment. At 371–376 (DKIGRR) the chain is on the cytoplasmic side. A helical membrane pass occupies residues 377–397 (GLLLVGVPVLLLGLVWNIIGF). The Extracellular portion of the chain corresponds to 398–420 (YYMCKPTGGFLDTSYSYDTTNVG). Residues 421-441 (IVIGGIVFYVAGFGLTYSHLV) traverse the membrane as a helical segment. Residues 442–455 (WYQAEYLALEVRSM) are Cytoplasmic-facing. The chain crosses the membrane as a helical span at residues 456-476 (GSGVATTVCWIANLVVSVSYL). Residues 477–485 (SELETMTPS) lie on the Extracellular side of the membrane. Residues 486–506 (GTYGFYLGLSVIAFVFVVFCF) form a helical membrane-spanning segment. Residues 507 to 590 (PETKQLSIDE…GGKRKPQVLV (84 aa)) lie on the Cytoplasmic side of the membrane.

It belongs to the major facilitator superfamily. Sugar transporter (TC 2.A.1.1) family.

The protein resides in the cell membrane. The enzyme catalyses myo-inositol(out) + H(+)(out) = myo-inositol(in) + H(+)(in). Transporter for myo-inositol. The polypeptide is Myo-inositol transporter 3 (Cryptococcus neoformans var. grubii serotype A (strain H99 / ATCC 208821 / CBS 10515 / FGSC 9487) (Filobasidiella neoformans var. grubii)).